The chain runs to 100 residues: Aspartyl/glutamyl-tRNA(Asn/Gln) amidotransferase subunit C (100 aa).

The protein belongs to the GatC family. Heterotrimer of A, B and C subunits.

It catalyses the reaction L-glutamyl-tRNA(Gln) + L-glutamine + ATP + H2O = L-glutaminyl-tRNA(Gln) + L-glutamate + ADP + phosphate + H(+). The enzyme catalyses L-aspartyl-tRNA(Asn) + L-glutamine + ATP + H2O = L-asparaginyl-tRNA(Asn) + L-glutamate + ADP + phosphate + 2 H(+). Its function is as follows. Allows the formation of correctly charged Asn-tRNA(Asn) or Gln-tRNA(Gln) through the transamidation of misacylated Asp-tRNA(Asn) or Glu-tRNA(Gln) in organisms which lack either or both of asparaginyl-tRNA or glutaminyl-tRNA synthetases. The reaction takes place in the presence of glutamine and ATP through an activated phospho-Asp-tRNA(Asn) or phospho-Glu-tRNA(Gln). This chain is Aspartyl/glutamyl-tRNA(Asn/Gln) amidotransferase subunit C, found in Petrotoga mobilis (strain DSM 10674 / SJ95).